An 874-amino-acid chain; its full sequence is Alanine--tRNA ligase (874 aa).

Zn(2+) contacts are provided by His-563, His-567, Cys-665, and His-669.

This sequence belongs to the class-II aminoacyl-tRNA synthetase family. It depends on Zn(2+) as a cofactor.

It localises to the cytoplasm. The enzyme catalyses tRNA(Ala) + L-alanine + ATP = L-alanyl-tRNA(Ala) + AMP + diphosphate. Functionally, catalyzes the attachment of alanine to tRNA(Ala) in a two-step reaction: alanine is first activated by ATP to form Ala-AMP and then transferred to the acceptor end of tRNA(Ala). Also edits incorrectly charged Ser-tRNA(Ala) and Gly-tRNA(Ala) via its editing domain. The protein is Alanine--tRNA ligase of Haemophilus influenzae (strain 86-028NP).